A 205-amino-acid chain; its full sequence is MIENKFNNTILNSNSSTHDKISETKKLFGLWIYLMSDCIMFAVLFAVYAIVSSNISINLISNKIFNLSSILLETFLLLLSSLSCGFVVIAMNQKRIKMIYSFLTITFIFGLIFLLMEVHEFYELIIENFGPDKNAFFSIFFTLVATHGVHIFFGLILILSILYQIKKLGLTNSIRTRILCFSVFWHFLDIIWICVFTFVYLNGAI.

Over 1–26 (MIENKFNNTILNSNSSTHDKISETKK) the chain is Cytoplasmic. A helical transmembrane segment spans residues 27–47 (LFGLWIYLMSDCIMFAVLFAV). Residues 48–69 (YAIVSSNISINLISNKIFNLSS) lie on the Extracellular side of the membrane. Residues 70 to 90 (ILLETFLLLLSSLSCGFVVIA) form a helical membrane-spanning segment. Residues 91–97 (MNQKRIK) lie on the Cytoplasmic side of the membrane. Residues 98 to 118 (MIYSFLTITFIFGLIFLLMEV) traverse the membrane as a helical segment. The Extracellular portion of the chain corresponds to 119-138 (HEFYELIIENFGPDKNAFFS). Residues 139–159 (IFFTLVATHGVHIFFGLILIL) traverse the membrane as a helical segment. Over 160 to 177 (SILYQIKKLGLTNSIRTR) the chain is Cytoplasmic. Residues 178-198 (ILCFSVFWHFLDIIWICVFTF) traverse the membrane as a helical segment. At 199 to 205 (VYLNGAI) the chain is on the extracellular side.

The protein belongs to the cytochrome c oxidase subunit 3 family. In terms of assembly, heterooctamer of two A chains, two B chains, two C chains and two D chains.

It localises to the cell membrane. Cytochrome bo(3) ubiquinol terminal oxidase is the component of the aerobic respiratory chain of E.coli that predominates when cells are grown at high aeration. Has proton pump activity across the membrane in addition to electron transfer, pumping 2 protons/electron. This is Cytochrome bo(3) ubiquinol oxidase subunit 3 (cyoC) from Buchnera aphidicola subsp. Acyrthosiphon pisum (strain APS) (Acyrthosiphon pisum symbiotic bacterium).